We begin with the raw amino-acid sequence, 99 residues long: Turripeptide OL71 (99 aa).

In terms of processing, contains 5 disulfide bonds. Expressed by the venom duct.

Its subcellular location is the secreted. Functionally, acts as a neurotoxin by inhibiting an ion channel. The chain is Turripeptide OL71 from Iotyrris olangoensis (Sea snail).